The sequence spans 262 residues: 4-hydroxy-2-oxo-heptane-1,7-dioate aldolase (262 aa).

His45 (proton acceptor) is an active-site residue. Gln147 contributes to the substrate binding site. Glu149 is a binding site for a divalent metal cation. Substrate-binding residues include Ala174 and Asp175. An a divalent metal cation-binding site is contributed by Asp175.

Belongs to the HpcH/HpaI aldolase family. As to quaternary structure, homohexamer; trimer of dimers. Requires a divalent metal cation as cofactor.

The enzyme catalyses 4-hydroxy-2-oxoheptanedioate = succinate semialdehyde + pyruvate. It functions in the pathway aromatic compound metabolism; 4-hydroxyphenylacetate degradation; pyruvate and succinate semialdehyde from 4-hydroxyphenylacetate: step 7/7. Catalyzes the reversible retro-aldol cleavage of 4-hydroxy-2-ketoheptane-1,7-dioate (HKHD) to pyruvate and succinic semialdehyde. The polypeptide is 4-hydroxy-2-oxo-heptane-1,7-dioate aldolase (Shigella boydii serotype 18 (strain CDC 3083-94 / BS512)).